The sequence spans 37 residues: Calcitonin gene-related peptide 1 (37 aa).

Residues cysteine 2 and cysteine 7 are joined by a disulfide bond. Position 37 is a phenylalanine amide (phenylalanine 37).

It belongs to the calcitonin family.

The protein localises to the secreted. In terms of biological role, CGRP1/CALCA is a peptide hormone that induces vasodilation mediated by the CALCRL-RAMP1 receptor complex. Dilates a variety of vessels including the coronary, cerebral and systemic vasculature. Its abundance in the CNS also points toward a neurotransmitter or neuromodulator role. It also elevates platelet cAMP. CGRP1 can also bind and activate CALCR-RAMP1 (AMYR1) receptor complex. This is Calcitonin gene-related peptide 1 (CALCA) from Ovis aries (Sheep).